A 310-amino-acid polypeptide reads, in one-letter code: Putative carboxypeptidase SCO6489 (310 aa).

S116 functions as the Nucleophile in the catalytic mechanism. Active-site charge relay system residues include E212 and H277.

This sequence belongs to the peptidase S66 family.

The sequence is that of Putative carboxypeptidase SCO6489 from Streptomyces coelicolor (strain ATCC BAA-471 / A3(2) / M145).